A 98-amino-acid polypeptide reads, in one-letter code: Small ribosomal subunit protein uS17B (98 aa).

Belongs to the universal ribosomal protein uS17 family. In terms of assembly, part of the 30S ribosomal subunit.

Functionally, one of the primary rRNA binding proteins, it binds specifically to the 5'-end of 16S ribosomal RNA. This Bacteroides thetaiotaomicron (strain ATCC 29148 / DSM 2079 / JCM 5827 / CCUG 10774 / NCTC 10582 / VPI-5482 / E50) protein is Small ribosomal subunit protein uS17B.